We begin with the raw amino-acid sequence, 446 residues long: Glucosylglycerate hydrolase (446 aa).

Substrate contacts are provided by residues Y36, 40–43, Y88, Q115, and G180; that span reads WSWD. Catalysis depends on D182, which acts as the Proton donor. Substrate-binding positions include R216 and 375–376; that span reads YW. Residue E419 is the Proton acceptor of the active site. Q434 is a binding site for substrate.

The protein belongs to the glycosyl hydrolase 63 family. In terms of assembly, homotetramer. Dimer of dimers.

It carries out the reaction (2R)-2-O-(alpha-D-glucopyranosyl)-glycerate + H2O = (R)-glycerate + D-glucose. Activity is not dependent on divalent cations, but it is enhanced by Mg(2+). Functionally, catalyzes the hydrolysis of glucosylglycerate (GG) to glycerate and glucose. Involved in recovery from nitrogen starvation by promoting the rapid mobilization of the glucosylglycerate that accumulates under these conditions. Can also hydrolyze mannosylglycerate (MG), with tenfold lower efficiency. The protein is Glucosylglycerate hydrolase of Mycolicibacterium hassiacum (strain DSM 44199 / CIP 105218 / JCM 12690 / 3849) (Mycobacterium hassiacum).